A 351-amino-acid polypeptide reads, in one-letter code: Nicotinate-nucleotide--dimethylbenzimidazole phosphoribosyltransferase (351 aa).

Glutamate 317 functions as the Proton acceptor in the catalytic mechanism.

It belongs to the CobT family.

The catalysed reaction is 5,6-dimethylbenzimidazole + nicotinate beta-D-ribonucleotide = alpha-ribazole 5'-phosphate + nicotinate + H(+). Its pathway is nucleoside biosynthesis; alpha-ribazole biosynthesis; alpha-ribazole from 5,6-dimethylbenzimidazole: step 1/2. Functionally, catalyzes the synthesis of alpha-ribazole-5'-phosphate from nicotinate mononucleotide (NAMN) and 5,6-dimethylbenzimidazole (DMB). The protein is Nicotinate-nucleotide--dimethylbenzimidazole phosphoribosyltransferase of Pseudomonas aeruginosa (strain LESB58).